We begin with the raw amino-acid sequence, 534 residues long: 5'-nucleotidase domain-containing protein 3 (534 aa).

Catalysis depends on Asp-104, which acts as the Nucleophile. The Mg(2+) site is built by Asp-104 and Asp-106. The active-site Proton donor is the Asp-106. 234 to 242 (KEAIRDVHV) contributes to the substrate binding site. Asp-372 contacts Mg(2+).

Belongs to the 5'(3')-deoxyribonucleotidase family. The cofactor is Mg(2+).

The chain is 5'-nucleotidase domain-containing protein 3 (nt5dc3) from Xenopus tropicalis (Western clawed frog).